A 231-amino-acid polypeptide reads, in one-letter code: Large ribosomal subunit protein uL1 (231 aa).

This sequence belongs to the universal ribosomal protein uL1 family. In terms of assembly, part of the 50S ribosomal subunit.

In terms of biological role, binds directly to 23S rRNA. The L1 stalk is quite mobile in the ribosome, and is involved in E site tRNA release. Functionally, protein L1 is also a translational repressor protein, it controls the translation of the L11 operon by binding to its mRNA. The chain is Large ribosomal subunit protein uL1 from Mesomycoplasma hyopneumoniae (strain 232) (Mycoplasma hyopneumoniae).